A 653-amino-acid polypeptide reads, in one-letter code: PAN2-PAN3 deadenylation complex subunit PAN3 (653 aa).

2 disordered regions span residues 1–21 and 45–128; these read MASD…ENAK and HDPN…AAPD. The C3H1-type zinc finger occupies 19-48; the sequence is NAKDTLCRNVTIYGRCRYEDKGCVYNHDPN. The segment covering 68–95 has biased composition (low complexity); it reads SFTPSLLSSNGSSPTSSSATLKKTTTIS. The segment covering 108-119 has biased composition (polar residues); sequence GISSRSNASTPS. A pseudokinase domain region spans residues 256–516; the sequence is QTLPNTQLPA…TIDIFITGIS (261 aa). ATP contacts are provided by residues Arg308, 357-364, and 416-417; these read DYHPLSKT and SK. The stretch at 517–555 forms a coiled coil; sequence SQLMSTFDSALHMDDQLTSDLSRELENGRLVRLMTKLNF. Positions 556-653 are knob domain; sequence INERPEYEHD…ALLKPTRRVH (98 aa).

Belongs to the protein kinase superfamily. PAN3 family. In terms of assembly, homodimer. Forms a heterotrimer with a catalytic subunit pan2 to form the poly(A)-nuclease (PAN) deadenylation complex. Interacts (via PAM-2 motif) with poly(A)-binding protein pab1 (via PABC domain), conferring substrate specificity of the enzyme complex.

Its subcellular location is the cytoplasm. Functionally, regulatory subunit of the poly(A)-nuclease (PAN) deadenylation complex, one of two cytoplasmic mRNA deadenylases involved in mRNA turnover. PAN specifically shortens poly(A) tails of RNA and the activity is stimulated by poly(A)-binding protein pab1. PAN deadenylation is followed by rapid degradation of the shortened mRNA tails by the CCR4-NOT complex. Deadenylated mRNAs are then degraded by two alternative mechanisms, namely exosome-mediated 3'-5' exonucleolytic degradation, or deadenylation-dependent mRNA decaping and subsequent 5'-3' exonucleolytic degradation by xrn1. May also be involved in post-transcriptional maturation of mRNA poly(A) tails. pan3 acts as a positive regulator for PAN activity, recruiting the catalytic subunit pan2 to mRNA via its interaction with RNA and with pab1. The chain is PAN2-PAN3 deadenylation complex subunit PAN3 from Aspergillus terreus (strain NIH 2624 / FGSC A1156).